The primary structure comprises 322 residues: Eukaryotic translation initiation factor 3 subunit I (322 aa).

5 WD repeats span residues 4-43 (GHER…RLGT), 46-85 (GHQG…VIAS), 141-180 (MVES…KVVD), 184-223 (DHTA…CLKT), and 281-322 (GHFG…NIFE).

The protein belongs to the eIF-3 subunit I family. In terms of assembly, component of the eukaryotic translation initiation factor 3 (eIF-3) complex. The eIF-3 complex interacts with pix.

Its subcellular location is the cytoplasm. Functionally, component of the eukaryotic translation initiation factor 3 (eIF-3) complex, which is involved in protein synthesis of a specialized repertoire of mRNAs and, together with other initiation factors, stimulates binding of mRNA and methionyl-tRNAi to the 40S ribosome. The eIF-3 complex specifically targets and initiates translation of a subset of mRNAs involved in cell proliferation. This Drosophila virilis (Fruit fly) protein is Eukaryotic translation initiation factor 3 subunit I.